Here is a 59-residue protein sequence, read N- to C-terminus: Small ribosomal subunit protein bS21 (59 aa).

The disordered stretch occupies residues 36–59 (EHYEKPSVKRKKKAEAAKRNKSKF). The segment covering 43-59 (VKRKKKAEAAKRNKSKF) has biased composition (basic residues).

It belongs to the bacterial ribosomal protein bS21 family.

This chain is Small ribosomal subunit protein bS21, found in Alkaliphilus oremlandii (strain OhILAs) (Clostridium oremlandii (strain OhILAs)).